A 140-amino-acid chain; its full sequence is Large ribosomal subunit protein uL15 (140 aa).

The disordered stretch occupies residues 1 to 32 (MDTKKFRGSRTCGGGTHKNRRGAGNRGGRGKA).

It belongs to the universal ribosomal protein uL15 family. As to quaternary structure, part of the 50S ribosomal subunit.

Functionally, binds to the 23S rRNA. In Methanosarcina acetivorans (strain ATCC 35395 / DSM 2834 / JCM 12185 / C2A), this protein is Large ribosomal subunit protein uL15.